Reading from the N-terminus, the 137-residue chain is Small heat shock protein IbpA (137 aa).

A sHSP domain is found at 28 to 137; it reads SQSNGGYPPY…ANKPRRIEIN (110 aa).

The protein belongs to the small heat shock protein (HSP20) family. Monomer. Forms homomultimers of about 100-150 subunits at optimal growth temperatures. Conformation changes to monomers at high temperatures or high ionic concentrations.

The protein localises to the cytoplasm. Functionally, associates with aggregated proteins, together with IbpB, to stabilize and protect them from irreversible denaturation and extensive proteolysis during heat shock and oxidative stress. Aggregated proteins bound to the IbpAB complex are more efficiently refolded and reactivated by the ATP-dependent chaperone systems ClpB and DnaK/DnaJ/GrpE. Its activity is ATP-independent. This is Small heat shock protein IbpA from Citrobacter koseri (strain ATCC BAA-895 / CDC 4225-83 / SGSC4696).